A 252-amino-acid polypeptide reads, in one-letter code: MRRPFIAGNWKLHKTSAEAAALVGELKGALSDVVDRDIVVAPVFTSLAAVIATLEKSDISVAAQNCYPENQGAFTGEVSPALLKDAGCRYVIVGHSERRQLFAESDAFINRKVKAVIDAGLSAILCIGETLEEREADKTFDVLERQVRCGLEGLDAAAMEQIVVAYEPVWAIGTGKTATDSQAQQAHSFIRSLVNDIFGSKVAQQVRIVYGGSVKPGNVDGLLQQPDIDGALVGGASLNAEDFIRIVKFKAV.

9 to 11 (NWK) is a binding site for substrate. Catalysis depends on His-95, which acts as the Electrophile. Glu-167 acts as the Proton acceptor in catalysis. Substrate is bound by residues Gly-173, Ser-213, and 234–235 (GG).

It belongs to the triosephosphate isomerase family. Homodimer.

The protein resides in the cytoplasm. It catalyses the reaction D-glyceraldehyde 3-phosphate = dihydroxyacetone phosphate. The protein operates within carbohydrate biosynthesis; gluconeogenesis. It participates in carbohydrate degradation; glycolysis; D-glyceraldehyde 3-phosphate from glycerone phosphate: step 1/1. Involved in the gluconeogenesis. Catalyzes stereospecifically the conversion of dihydroxyacetone phosphate (DHAP) to D-glyceraldehyde-3-phosphate (G3P). The polypeptide is Triosephosphate isomerase (Syntrophotalea carbinolica (strain DSM 2380 / NBRC 103641 / GraBd1) (Pelobacter carbinolicus)).